A 686-amino-acid polypeptide reads, in one-letter code: Calponin homology and LIM domain-containing protein (686 aa).

In terms of domain architecture, Calponin-homology (CH) spans 15–120 (ELALDESRDW…ITLYWLGRAA (106 aa)). LIM zinc-binding domains follow at residues 139-200 (MNCS…ATNL) and 219-279 (NKCS…SCGK). The span at 305-314 (KQVMDKDGHD) shows a compositional bias: basic and acidic residues. The disordered stretch occupies residues 305 to 345 (KQVMDKDGHDHHHHNHNKPTTTTTTTNSNSPLAKKKSDSCK). A compositionally biased stretch (low complexity) spans 322–333 (KPTTTTTTTNSN). LIM zinc-binding domains are found at residues 373-435 (GTCG…NNKS), 437-495 (KNCH…LNQY), 519-579 (DRCV…IQQS), and 583-658 (DHCA…ASSS).

In terms of assembly, interacts with limF and rab21.

Its function is as follows. Involved in the regulation of phagocytosis. May repress rab21. This Dictyostelium discoideum (Social amoeba) protein is Calponin homology and LIM domain-containing protein (ChLim).